Reading from the N-terminus, the 378-residue chain is Interleukin-3 receptor subunit alpha (378 aa).

Positions 1-18 are cleaved as a signal peptide; that stretch reads MVLLWLTLLLIALPCLLQ. Topologically, residues 19-305 are extracellular; the sequence is TKEDPNPPIT…EEGANTRAWR (287 aa). 4 N-linked (GlcNAc...) asparagine glycosylation sites follow: Asn46, Asn64, Asn80, and Asn109. Disulfide bonds link Cys52-Cys68, Cys76-Cys195, Cys112-Cys122, and Cys151-Cys165. Residues Asn212 and Asn218 are each glycosylated (N-linked (GlcNAc...) asparagine). A disulfide bridge links Cys217 with Cys293. The short motif at 282-286 is the WSXWS motif element; the sequence is LSAWS. A helical transmembrane segment spans residues 306-325; sequence TSLLIALGTLLALVCVFVIC. Residues 326 to 378 lie on the Cytoplasmic side of the membrane; that stretch reads RRYLVMQRLFPRIPHMKDPIGDSFQNDKLVVWEAGKAGLEECLVTEVQVVQKT. The short motif at 334–342 is the Box 1 motif element; that stretch reads LFPRIPHMK.

Belongs to the type I cytokine receptor family. Type 5 subfamily. Interacts with IL3. Heterodimer of an alpha and a beta subunit. The beta subunit is common to the IL3, IL5 and GM-CSF receptors. Ubiquitinated by RNFT2 in response to IL3. Ubiquitination leads ligand-induced degradation by the proteasome. Ubiquitinated by RNF128 via 'Lys-27'-linked polyubiquitination, facilitating its degradation through the lysosomal pathway.

It localises to the cell membrane. Its function is as follows. Cell surface receptor for IL3 expressed on hematopoietic progenitor cells, monocytes and B-lymphocytes that controls the production and differentiation of hematopoietic progenitor cells into lineage-restricted cells. Ligand stimulation rapidly induces hetrodimerization with IL3RB, phosphorylation and enzyme activity of effector proteins such as JAK2 and PI3K that play a role in signaling cell proliferation and differentiation. Activation of JAK2 leads to STAT5-mediated transcriptional program. The polypeptide is Interleukin-3 receptor subunit alpha (Homo sapiens (Human)).